The chain runs to 367 residues: NAD(P)H-quinone oxidoreductase subunit 1, chloroplastic (367 aa).

7 consecutive transmembrane segments (helical) span residues 30-50, 98-118, 127-147, 164-184, 273-293, 304-324, and 340-360; these read LFPI…IVWL, FSIG…VIPF, LSIG…GLLM, AAAQ…SISL, LFVT…IFVP, VFGT…FLFI, and LLNL…LLTT.

It belongs to the complex I subunit 1 family. NDH is composed of at least 16 different subunits, 5 of which are encoded in the nucleus.

It is found in the plastid. The protein localises to the chloroplast thylakoid membrane. It catalyses the reaction a plastoquinone + NADH + (n+1) H(+)(in) = a plastoquinol + NAD(+) + n H(+)(out). The enzyme catalyses a plastoquinone + NADPH + (n+1) H(+)(in) = a plastoquinol + NADP(+) + n H(+)(out). Its function is as follows. NDH shuttles electrons from NAD(P)H:plastoquinone, via FMN and iron-sulfur (Fe-S) centers, to quinones in the photosynthetic chain and possibly in a chloroplast respiratory chain. The immediate electron acceptor for the enzyme in this species is believed to be plastoquinone. Couples the redox reaction to proton translocation, and thus conserves the redox energy in a proton gradient. This is NAD(P)H-quinone oxidoreductase subunit 1, chloroplastic from Nicotiana tabacum (Common tobacco).